The sequence spans 360 residues: Tubulin-like protein CetZ2 (360 aa).

GTP is bound by residues Q10–K14, G65–G66, G106–G108, E138, N165, and N183. A compositionally biased stretch (basic and acidic residues) spans E334–D354. Residues E334 to L360 are disordered.

It belongs to the CetZ family.

It localises to the cytoplasm. Functionally, involved in cell shape control. In Haloferax volcanii (strain ATCC 29605 / DSM 3757 / JCM 8879 / NBRC 14742 / NCIMB 2012 / VKM B-1768 / DS2) (Halobacterium volcanii), this protein is Tubulin-like protein CetZ2.